Here is a 310-residue protein sequence, read N- to C-terminus: L-lactate dehydrogenase (310 aa).

Residues 10-11 (MV), aspartate 32, tyrosine 62, and 76-77 (GV) contribute to the NAD(+) site. Substrate-binding positions include glutamine 79, arginine 85, and 117 to 120 (NPVD). NAD(+)-binding positions include 115–117 (ATN) and serine 140. 145–148 (DTAR) is a substrate binding site. Positions 150 and 165 each coordinate beta-D-fructose 1,6-bisphosphate. Histidine 172 (proton acceptor) is an active-site residue. Tyrosine 218 carries the post-translational modification Phosphotyrosine. Threonine 227 contacts substrate.

Belongs to the LDH/MDH superfamily. LDH family. In terms of assembly, homotetramer.

It localises to the cytoplasm. It carries out the reaction (S)-lactate + NAD(+) = pyruvate + NADH + H(+). Its pathway is fermentation; pyruvate fermentation to lactate; (S)-lactate from pyruvate: step 1/1. With respect to regulation, allosterically activated by fructose 1,6-bisphosphate (FBP). Catalyzes the conversion of lactate to pyruvate. In Thermus thermophilus (strain ATCC 27634 / DSM 579 / HB8), this protein is L-lactate dehydrogenase.